The chain runs to 923 residues: Neuropilin-1a (923 aa).

The N-terminal stretch at 1–19 (MHCGLVLILFTGIFLIVSA) is a signal peptide. Topologically, residues 20–856 (LKNDKCGDNI…AGNMLKTLDP (837 aa)) are extracellular. Disulfide bonds link C25–C52, C80–C102, and C145–C171. CUB domains follow at residues 25-139 (CGDN…YEIF) and 145-263 (CSRN…FTVL). N148 carries N-linked (GlcNAc...) asparagine glycosylation. Ca(2+) is bound by residues E193, D207, and D248. C204 and C226 are disulfide-bonded. The N-linked (GlcNAc...) asparagine glycan is linked to N259. 2 disulfide bridges follow: C273–C422 and C429–C581. F5/8 type C domains lie at 273–422 (CTEP…VYGC) and 429–581 (CSGM…LLGC). N520 carries N-linked (GlcNAc...) asparagine glycosylation. The interval 587–624 (TVPPTTPAASTTPSDECDDDQANCHSGTGDGYDQTGGT) is disordered. S612 carries O-linked (Xyl...) (chondroitin sulfate) serine; alternate glycosylation. S612 carries an O-linked (Xyl...) (heparan sulfate) serine; alternate glycan. The MAM domain maps to 642–811 (FACDFGWAND…DNVNMADCKD (170 aa)). Residues 857 to 877 (ILITIIAMSALGVFLGAICGV) form a helical membrane-spanning segment. At 878–923 (VLYCACSHSGMSDRNLSALENYNFELVDGVKLKKDKLNSQNSYSEA) the chain is on the cytoplasmic side.

It belongs to the neuropilin family.

It localises to the membrane. Functionally, receptor involved in the development of the cardiovascular system, in angiogenesis, in the formation of certain neuronal circuits and in organogenesis outside the nervous system. It mediates the chemorepulsant activity of semaphorins. Regulates angiogenesis through a VEGF-dependent pathway. In Danio rerio (Zebrafish), this protein is Neuropilin-1a (nrp1a).